A 368-amino-acid chain; its full sequence is Phosphate acyltransferase (368 aa).

The protein belongs to the PlsX family. As to quaternary structure, homodimer. Probably interacts with PlsY.

The protein localises to the cytoplasm. The catalysed reaction is a fatty acyl-[ACP] + phosphate = an acyl phosphate + holo-[ACP]. It functions in the pathway lipid metabolism; phospholipid metabolism. In terms of biological role, catalyzes the reversible formation of acyl-phosphate (acyl-PO(4)) from acyl-[acyl-carrier-protein] (acyl-ACP). This enzyme utilizes acyl-ACP as fatty acyl donor, but not acyl-CoA. This is Phosphate acyltransferase from Cereibacter sphaeroides (strain ATCC 17025 / ATH 2.4.3) (Rhodobacter sphaeroides).